Consider the following 897-residue polypeptide: Probable bifunctional chitinase/lysozyme (897 aa).

The N-terminal stretch at 1–24 is a signal peptide; that stretch reads MKLNIFTKSMIGMGLVCSALPALA. One can recognise a Chitin-binding type-3 1 domain in the interval 25-91; sequence MEAWNNQQGG…SQFGNTLSCE (67 aa). Disordered regions lie at residues 90-127, 182-222, and 287-333; these read CEKSGSSSSSNSNTPASNTPANGGSATPAQGTVPSNSS, TEIS…PADK, and QYGN…DSVN. Positions 95-111 are enriched in low complexity; it reads SSSSSNSNTPASNTPAN. Polar residues-rich tracts occupy residues 113 to 127 and 182 to 197; these read GSATPAQGTVPSNSS and TEISETSNPQSCTSAP. Residues 128–194 enclose the Chitin-binding type-3 2 domain; that stretch reads VVAWNKQQGG…SETSNPQSCT (67 aa). The segment covering 198-216 has biased composition (pro residues); that stretch reads QPSPDVKPAPDVKPAPDVQ. The 67-residue stretch at 229 to 295 folds into the Chitin-binding type-3 3 domain; sequence VVAWKGQEGS…SQYGNPGSCS (67 aa). Positions 309-318 are enriched in pro residues; the sequence is DPTPETPVTP. The segment covering 322–333 has biased composition (polar residues); it reads NSEPSTPADSVN. 2 consecutive Chitin-binding type-3 domains span residues 337 to 403 and 459 to 529; these read LQAW…TTCE and AKAW…PQFN. The region spanning 586–877 is the GH18 domain; it reads KHVYAPYVDF…TNLSPEFHGL (292 aa). Cys628 and Cys673 are joined by a disulfide. Glu700 acts as the Proton donor in catalysis.

It belongs to the glycosyl hydrolase 18 family. Chitinase class II subfamily.

Its subcellular location is the periplasm. The enzyme catalyses Random endo-hydrolysis of N-acetyl-beta-D-glucosaminide (1-&gt;4)-beta-linkages in chitin and chitodextrins.. The catalysed reaction is Hydrolysis of (1-&gt;4)-beta-linkages between N-acetylmuramic acid and N-acetyl-D-glucosamine residues in a peptidoglycan and between N-acetyl-D-glucosamine residues in chitodextrins.. In terms of biological role, bifunctional enzyme with lysozyme/chitinase activity. The protein is Probable bifunctional chitinase/lysozyme (chiA) of Escherichia coli (strain K12).